The sequence spans 119 residues: Large ribosomal subunit protein bL20 (119 aa).

The protein belongs to the bacterial ribosomal protein bL20 family.

Binds directly to 23S ribosomal RNA and is necessary for the in vitro assembly process of the 50S ribosomal subunit. It is not involved in the protein synthesizing functions of that subunit. This Xanthomonas oryzae pv. oryzae (strain KACC10331 / KXO85) protein is Large ribosomal subunit protein bL20.